The sequence spans 257 residues: Pyrroline-5-carboxylate reductase (257 aa).

This sequence belongs to the pyrroline-5-carboxylate reductase family.

It localises to the cytoplasm. It catalyses the reaction L-proline + NADP(+) = (S)-1-pyrroline-5-carboxylate + NADPH + 2 H(+). It carries out the reaction L-proline + NAD(+) = (S)-1-pyrroline-5-carboxylate + NADH + 2 H(+). The protein operates within amino-acid biosynthesis; L-proline biosynthesis; L-proline from L-glutamate 5-semialdehyde: step 1/1. Catalyzes the reduction of 1-pyrroline-5-carboxylate (PCA) to L-proline. The polypeptide is Pyrroline-5-carboxylate reductase (Helicobacter pylori (strain J99 / ATCC 700824) (Campylobacter pylori J99)).